A 738-amino-acid polypeptide reads, in one-letter code: Adhesion G protein-coupled receptor L4 (738 aa).

Positions 1-19 are cleaved as a signal peptide; it reads MRLLLLLVGLSTLLNHSYT. The 37-residue stretch at 20–56 folds into the EGF-like 1 domain; sequence QNCKTPCLPNAKCEVLDEVAACFCSTGYTGNGITICE. At 20–480 the chain is on the extracellular side; sequence QNCKTPCLPN…DYNILTRITQ (461 aa). Disulfide bonds link Cys22-Cys32, Cys26-Cys41, Cys43-Cys55, Cys61-Cys73, Cys67-Cys82, Cys84-Cys105, Cys111-Cys123, Cys117-Cys132, and Cys134-Cys155. Residues 57–106 form the EGF-like 2; calcium-binding domain; it reads DVDECNETSVCGDHAVCENTNGGFSCFCVEGYQTSTGKTQFTPNDGSYCQ. Asn62 carries N-linked (GlcNAc...) asparagine glycosylation. In terms of domain architecture, EGF-like 3; calcium-binding spans 107–156; the sequence is DVDECNETSVCGDHAVCENTNGGFSCFCVEGYQTSTGKTQFTPNDGSYCQ. Asn112 is a glycosylation site (N-linked (GlcNAc...) asparagine). N-linked (GlcNAc...) asparagine glycans are attached at residues Asn175, Asn226, Asn297, Asn421, Asn429, and Asn443. The GAIN-B domain occupies 292–467; it reads TQFDMNSTDL…AILMSPSTSI (176 aa). Intrachain disulfides connect Cys417-Cys449 and Cys437-Cys451. The tract at residues 417 to 467 is GPS; the sequence is CAFWNYSVDDMNNGSWSSEGCELTYSNDTHTSCRCSHLTHFAILMSPSTSI. Residues 481-501 traverse the membrane as a helical segment; the sequence is LGIIISLICLAICIFTFWFFS. Over 502-522 the chain is Cytoplasmic; it reads EIQSTRTTIHKNLCCSLFLAQ. The chain crosses the membrane as a helical span at residues 523–543; that stretch reads LVFLVGININTNKLVCSIIAG. The Extracellular portion of the chain corresponds to 544–547; it reads LLHY. Residues 548 to 568 form a helical membrane-spanning segment; that stretch reads FFLAAFAWMCIEGIYLYLIVV. Over 569–580 the chain is Cytoplasmic; that stretch reads GLIYNKGFLHKN. A helical transmembrane segment spans residues 581-601; the sequence is FYIFGYLSPAVVVGFSASLGY. The Extracellular portion of the chain corresponds to 602-621; that stretch reads RYYGTTKVCWLSTENNFIWS. The helical transmembrane segment at 622-642 threads the bilayer; the sequence is FIGPACLIILVNLLAFGVIIY. Residues 643 to 666 are Cytoplasmic-facing; sequence KVFRHTAGLKPEVSCYENIRSCAR. Residues 667-687 traverse the membrane as a helical segment; it reads GALALLFLLGTTWTFGVLHVV. The Extracellular portion of the chain corresponds to 688-694; that stretch reads HASVVTA. Residues 695–715 form a helical membrane-spanning segment; it reads YLFTVSNAFQGMFIFLFLCVL. Residues 716-738 lie on the Cytoplasmic side of the membrane; sequence SRKIQEEYYRLFKNVPCCFECLR.

This sequence belongs to the G-protein coupled receptor 2 family. Adhesion G-protein coupled receptor (ADGR) subfamily. As to quaternary structure, heterodimer of 2 chains generated by proteolytic processing; the large extracellular N-terminal fragment and the membrane-bound C-terminal fragment predominantly remain associated and non-covalently linked. Proteolytically cleaved into 2 subunits, an extracellular alpha subunit and a seven-transmembrane subunit. In terms of processing, glycosylated. Abundantly expressed in heart, lung, and kidney. Less evident expression is observed in brain, skeletal muscle, liver and spleen. No expression is detected in testis.

Its subcellular location is the cell membrane. Functionally, endothelial orphan receptor that acts as a key regulator of angiogenesis. The chain is Adhesion G protein-coupled receptor L4 (Adgrl4) from Rattus norvegicus (Rat).